The chain runs to 472 residues: Phosphoenolpyruvate carboxykinase (ATP), glycosomal (472 aa).

221–228 contacts ATP; that stretch reads GLSGTGKT.

This sequence belongs to the phosphoenolpyruvate carboxykinase (ATP) family. As to quaternary structure, homodimer.

The protein resides in the glycosome. It catalyses the reaction oxaloacetate + ATP = phosphoenolpyruvate + ADP + CO2. It functions in the pathway carbohydrate biosynthesis; gluconeogenesis. The chain is Phosphoenolpyruvate carboxykinase (ATP), glycosomal (PEPCK) from Trypanosoma cruzi.